A 282-amino-acid polypeptide reads, in one-letter code: Reaction center protein L chain (282 aa).

At 2–32 (ALLSFERKYRVPGGTLVGGNLFDFWVGPFYV) the chain is on the cytoplasmic side. The chain crosses the membrane as a helical span at residues 33–56 (GFFGVATFFFAALGIILIAWSAVL). Residues 57 to 83 (QGTWNPQLISVYPPALEYGLGGAPLAK) are Periplasmic-facing. The helical transmembrane segment at 84 to 112 (GGLWQIITICATGAFVSWALREVEICRKL) threads the bilayer. At 113-116 (GIGY) the chain is on the cytoplasmic side. Residues 117–139 (HIPFAFAFAILAYLTLVLFRPVM) traverse the membrane as a helical segment. Over 140–171 (MGAWGYAFPYGIWTHLDWVSNTGYTYGNFHYN) the chain is Periplasmic. (7R,8Z)-bacteriochlorophyll b contacts are provided by His154 and His174. The chain crosses the membrane as a helical span at residues 172-199 (PAHMIAISFFFTNALALALHGALVLSAA). His191 provides a ligand contact to Fe cation. Over 200–225 (NPEKGKEMRTPDHEDTFFRDLVGYSI) the chain is Cytoplasmic. Phe217 serves as a coordination point for a ubiquinone. Residues 226 to 251 (GTLGIHRLGLLLSLSAVFFSALCMII) form a helical membrane-spanning segment. A Fe cation-binding site is contributed by His231. Residues 252–282 (TGTIWFDQWVDWWQWWVKLPWWANIPGGING) lie on the Periplasmic side of the membrane.

This sequence belongs to the reaction center PufL/M/PsbA/D family. In terms of assembly, reaction center is composed of four bacteriochlorophylls, two bacteriopheophytins, two ubiquinones, one iron, and three highly hydrophobic polypeptide chains (designated L, M, and H).

Its subcellular location is the cellular chromatophore membrane. Its function is as follows. The reaction center is a membrane-bound complex that mediates the initial photochemical event in the electron transfer process of photosynthesis. This is Reaction center protein L chain (pufL) from Cereibacter sphaeroides (strain ATCC 17023 / DSM 158 / JCM 6121 / CCUG 31486 / LMG 2827 / NBRC 12203 / NCIMB 8253 / ATH 2.4.1.) (Rhodobacter sphaeroides).